Consider the following 716-residue polypeptide: Polyribonucleotide nucleotidyltransferase (716 aa).

Mg(2+) is bound by residues Asp-485 and Asp-491. Residues 552 to 611 (PKITTISVPKEKIRDVIGSGGKVIREIVEYSGAKVDIGDDGTVTIAASNDEQAQKAIARI) form the KH domain. Positions 621 to 689 (GRIYEGKVVK…DRGKVKLSMR (69 aa)) constitute an S1 motif domain.

This sequence belongs to the polyribonucleotide nucleotidyltransferase family. It depends on Mg(2+) as a cofactor.

Its subcellular location is the cytoplasm. It catalyses the reaction RNA(n+1) + phosphate = RNA(n) + a ribonucleoside 5'-diphosphate. Its function is as follows. Involved in mRNA degradation. Catalyzes the phosphorolysis of single-stranded polyribonucleotides processively in the 3'- to 5'-direction. The polypeptide is Polyribonucleotide nucleotidyltransferase (Gluconobacter oxydans (strain 621H) (Gluconobacter suboxydans)).